Reading from the N-terminus, the 194-residue chain is MRKAERARTTNETDIKLAFEIDGEGKADISTDVPFMTHMLDLFTKHGQFNLTVDAKGDTEIDDHHTTEDIGICLGQAFLEALGDKKGIKRYGSALVPMDEALAQVAVDLSNRPHLEMRAAFPQAKVGTFDTELVHEFLWKLALEARMNLHVIVHYGTNTHHMIEAVFKALGRALDEASSIDPRVKGVPSTKGML.

It belongs to the imidazoleglycerol-phosphate dehydratase family.

The protein resides in the cytoplasm. It catalyses the reaction D-erythro-1-(imidazol-4-yl)glycerol 3-phosphate = 3-(imidazol-4-yl)-2-oxopropyl phosphate + H2O. It functions in the pathway amino-acid biosynthesis; L-histidine biosynthesis; L-histidine from 5-phospho-alpha-D-ribose 1-diphosphate: step 6/9. The protein is Imidazoleglycerol-phosphate dehydratase of Bacillus velezensis (strain DSM 23117 / BGSC 10A6 / LMG 26770 / FZB42) (Bacillus amyloliquefaciens subsp. plantarum).